A 1057-amino-acid chain; its full sequence is Diacylglycerol kinase iota (1057 aa).

The segment covering 15-59 (AARGPARAPAAAAAAAASPPGPCSGAACAPSAAAGAGAMNPSSSA) has biased composition (low complexity). Disordered stretches follow at residues 15 to 74 (AARG…SSGS) and 334 to 358 (LKASNRKKKRTSFKRKASKRGMEQE). Over residues 337 to 352 (SNRKKKRTSFKRKASK) the composition is skewed to basic residues. The DAGKc domain maps to 372–507 (PLMKPLLVFV…DRWNLHVERN (136 aa)). ANK repeat units follow at residues 950–979 (DHCSLLHYAAKTGNGEIVKYILDHGPSELL) and 986–1015 (TGETALHKAACQRNRAVCQLLVDAGASLRK). Over residues 1014 to 1024 (RKTDSKGKTPQ) the composition is skewed to basic and acidic residues. The segment at 1014–1033 (RKTDSKGKTPQERAQQAGDP) is disordered. The PDZ-binding signature appears at 1055 to 1057 (TAV).

It belongs to the eukaryotic diacylglycerol kinase family. Interacts (via PDZ-binding motif) with DLG4; controls the localization of DGKI to the synapse. Interacts (via PDZ-binding motif) with DLG1. Interacts (via PDZ-binding motif) with DLG2. Interacts (via PDZ-binding motif) with DLG3. May interact with RASGRP3; involved in the regulation of RASGRP3 activity. As to expression, specifically expressed in brain and retina. In brain, highly expressed in hippocampus, caudate nucleus, occipital pole, cerebral cortex, and cerebellum. Also detected in kidney.

Its subcellular location is the cell projection. The protein resides in the axon. It is found in the dendrite. The protein localises to the presynapse. It localises to the postsynapse. Its subcellular location is the postsynaptic density. The protein resides in the synaptic cell membrane. It is found in the cytoplasmic vesicle. The protein localises to the secretory vesicle. It localises to the synaptic vesicle membrane. Its subcellular location is the cytoplasm. The protein resides in the cytosol. It is found in the nucleus. It catalyses the reaction a 1,2-diacyl-sn-glycerol + ATP = a 1,2-diacyl-sn-glycero-3-phosphate + ADP + H(+). The enzyme catalyses 1,2-di-(9Z-octadecenoyl)-sn-glycerol + ATP = 1,2-di-(9Z-octadecenoyl)-sn-glycero-3-phosphate + ADP + H(+). It carries out the reaction 1-octadecanoyl-2-(5Z,8Z,11Z,14Z-eicosatetraenoyl)-sn-glycerol + ATP = 1-octadecanoyl-2-(5Z,8Z,11Z,14Z-eicosatetraenoyl)-sn-glycero-3-phosphate + ADP + H(+). The catalysed reaction is 1-octadecanoyl-2-(9Z,12Z)-octadecadienoyl-sn-glycerol + ATP = 1-octadecanoyl-2-(9Z,12Z-octadecadienoyl)-sn-glycero-3-phosphate + ADP + H(+). It participates in lipid metabolism; glycerolipid metabolism. Diacylglycerol kinase that converts diacylglycerol/DAG into phosphatidic acid/phosphatidate/PA and regulates the respective levels of these two bioactive lipids. Thereby, acts as a central switch between the signaling pathways activated by these second messengers with different cellular targets and opposite effects in numerous biological processes. Has probably no preference for any of the diacylglycerols in terms of the acyl chain composition, especially for the acyl chain at the sn-2 position. By controlling the diacylglycerol/DAG-mediated activation of RASGRP3, negatively regulates the Rap1 signaling pathway. May play a role in presynaptic diacylglycerol/DAG signaling and control neurotransmitter release during metabotropic glutamate receptor-dependent long-term depression. In Homo sapiens (Human), this protein is Diacylglycerol kinase iota.